Reading from the N-terminus, the 492-residue chain is Probable cytochrome P450 310a1 (492 aa).

A heme-binding site is contributed by Cys428.

The protein belongs to the cytochrome P450 family. Requires heme as cofactor.

The protein resides in the endoplasmic reticulum membrane. It is found in the microsome membrane. Functionally, may be involved in the metabolism of insect hormones and in the breakdown of synthetic insecticides. The protein is Probable cytochrome P450 310a1 (Cyp310a1) of Drosophila melanogaster (Fruit fly).